The following is a 210-amino-acid chain: Imidazole glycerol phosphate synthase subunit HisH (210 aa).

The 208-residue stretch at 3–210 folds into the Glutamine amidotransferase type-1 domain; that stretch reads KVALLDYGSG…QLLRNWIDLL (208 aa). The active-site Nucleophile is the C81. Residues H191 and E193 contribute to the active site.

In terms of assembly, heterodimer of HisH and HisF.

The protein resides in the cytoplasm. It catalyses the reaction 5-[(5-phospho-1-deoxy-D-ribulos-1-ylimino)methylamino]-1-(5-phospho-beta-D-ribosyl)imidazole-4-carboxamide + L-glutamine = D-erythro-1-(imidazol-4-yl)glycerol 3-phosphate + 5-amino-1-(5-phospho-beta-D-ribosyl)imidazole-4-carboxamide + L-glutamate + H(+). The enzyme catalyses L-glutamine + H2O = L-glutamate + NH4(+). It participates in amino-acid biosynthesis; L-histidine biosynthesis; L-histidine from 5-phospho-alpha-D-ribose 1-diphosphate: step 5/9. In terms of biological role, IGPS catalyzes the conversion of PRFAR and glutamine to IGP, AICAR and glutamate. The HisH subunit catalyzes the hydrolysis of glutamine to glutamate and ammonia as part of the synthesis of IGP and AICAR. The resulting ammonia molecule is channeled to the active site of HisF. This chain is Imidazole glycerol phosphate synthase subunit HisH, found in Corynebacterium diphtheriae (strain ATCC 700971 / NCTC 13129 / Biotype gravis).